Reading from the N-terminus, the 777-residue chain is Glucocorticoid receptor (777 aa).

A compositionally biased stretch (basic and acidic residues) spans 1–14 (MDSKESLTPGKEEN). The segment at 1–21 (MDSKESLTPGKEENPSSVLTQ) is disordered. Residues 1–420 (MDSKESLTPG…TATTGPPPKL (420 aa)) are modulating. Thr-8 bears the Phosphothreonine mark. Arg-23 carries the post-translational modification Omega-N-methylarginine. A phosphoserine mark is found at Ser-45, Ser-113, Ser-134, and Ser-141. The tract at residues 130-182 (NRSTSVPENPKSSASSSVSAAPKEKEFPKTHSDVSSEQQNLKGQTGTNGGNVK) is disordered. A compositionally biased stretch (low complexity) spans 134–150 (SVPENPKSSASSSVSAA). Residues 151 to 163 (PKEKEFPKTHSDV) are compositionally biased toward basic and acidic residues. A compositionally biased stretch (polar residues) spans 164 to 174 (SSEQQNLKGQT). 3 positions are modified to phosphoserine: Ser-203, Ser-211, and Ser-226. Lys-258 participates in a covalent cross-link: Glycyl lysine isopeptide (Lys-Gly) (interchain with G-Cter in SUMO2). Ser-267 carries the post-translational modification Phosphoserine. Residues Lys-277 and Lys-293 each participate in a glycyl lysine isopeptide (Lys-Gly) (interchain with G-Cter in SUMO); alternate cross-link. Residues Lys-277 and Lys-293 each participate in a glycyl lysine isopeptide (Lys-Gly) (interchain with G-Cter in SUMO2); alternate cross-link. A compositionally biased stretch (low complexity) spans 394–414 (SSPSMRPDVSSPPSSSSTATT). A disordered region spans residues 394 to 415 (SSPSMRPDVSSPPSSSSTATTG). A Phosphoserine modification is found at Ser-404. Lys-419 is covalently cross-linked (Glycyl lysine isopeptide (Lys-Gly) (interchain with G-Cter in ubiquitin)). 2 NR C4-type zinc fingers span residues 421–441 (CLVC…CGSC) and 457–481 (CAGR…YRKC). A DNA-binding region (nuclear receptor) is located at residues 421–486 (CLVCSDEASG…RYRKCLQAGM (66 aa)). N6-acetyllysine is present on residues Lys-480, Lys-492, Lys-494, and Lys-495. The tract at residues 485 to 777 (GMNLEARKTK…NIKKLLFHQK (293 aa)) is interaction with CLOCK. Positions 487 to 523 (NLEARKTKKKIKGIQQATTGVSQETSENPANKTIVPA) are hinge. Residues 524–758 (TLPQLTPTLV…FPEMLAEIIT (235 aa)) form the NR LBD domain. The interval 532–697 (LVSLLEVIEP…EIRMTYIKEL (166 aa)) is interaction with CRY1. A Glycyl lysine isopeptide (Lys-Gly) (interchain with G-Cter in SUMO) cross-link involves residue Lys-703.

Belongs to the nuclear hormone receptor family. NR3 subfamily. As to quaternary structure, heteromultimeric cytoplasmic complex with HSP90AA1, HSPA1A/HSPA1B, and FKBP5 or another immunophilin such as PPID, STIP1, or the immunophilin homolog PPP5C. Upon ligand binding FKBP5 dissociates from the complex and FKBP4 takes its place, thereby linking the complex to dynein and mediating transport to the nucleus, where the complex dissociates. Probably forms a complex composed of chaperones HSP90 and HSP70, co-chaperones CDC37, PPP5C, TSC1 and client protein TSC2, CDK4, AKT, RAF1 and NR3C1; this complex does not contain co-chaperones STIP1/HOP and PTGES3/p23. Directly interacts with UNC45A. Binds to DNA as a homodimer, and as heterodimer with NR3C2 or the retinoid X receptor. Binds STAT5A and STAT5B homodimers and heterodimers. Interacts with NRIP1, POU2F1, POU2F2 and TRIM28. Interacts with several coactivator complexes, including the SMARCA4 complex, CREBBP/EP300, TADA2L (Ada complex) and p160 coactivators such as NCOA2 and NCOA6. Interaction with BAG1 inhibits transactivation. Interacts with HEXIM1 and TGFB1I1. Interacts with NCOA1. Interacts with NCOA3, SMARCA4, SMARCC1, SMARCD1, and SMARCE1. Interacts with CLOCK, CRY1 and CRY2 in a ligand-dependent fashion. Interacts with CIART. Interacts with RWDD3. Interacts with UBE2I/UBC9 and this interaction is enhanced in the presence of RWDD3. Interacts with GRIP1. Interacts with NR4A3 (via nuclear receptor DNA-binding domain), represses transcription activity of NR4A3 on the POMC promoter Nur response element (NurRE). Directly interacts with PNRC2 to attract and form a complex with UPF1 and DCP1A; the interaction leads to rapid mRNA degradation. Interacts with GSK3B. Interacts with FNIP1 and FNIP2. Interacts (via C-terminus) with HNRNPU (via C-terminus). Interacts with MCM3AP. Interacts (via domain NR LBD) with HSP90AA1 and HSP90AB1. In the absence of hormonal ligand, interacts with TACC1. Interacts (via NR LBD domain) with ZNF764 (via KRAB domain); the interaction regulates transcription factor activity of NR3C1 by directing its actions toward certain biologic pathways. Post-translationally, acetylation by CLOCK reduces its binding to glucocorticoid response elements and its transcriptional activity. In terms of processing, increased proteasome-mediated degradation in response to glucocorticoids. Phosphorylated in the absence of hormone; becomes hyperphosphorylated in the presence of glucocorticoid. The Ser-203, Ser-226 and Ser-404-phosphorylated forms are mainly cytoplasmic, and the Ser-211-phosphorylated form is nuclear. Phosphorylation at Ser-211 increases transcriptional activity. Phosphorylation at Ser-203, Ser-226 and Ser-404 decreases signaling capacity. Phosphorylation at Ser-404 may protect from glucocorticoid-induced apoptosis. Phosphorylation at Ser-203 and Ser-211 is not required in regulation of chromosome segregation. May be dephosphorylated by PPP5C, attenuates NR3C1 action. Post-translationally, ubiquitinated by UBR5, leading to its degradation: UBR5 specifically recognizes and binds ligand-bound NR3C1 when it is not associated with coactivators (NCOAs). In presence of NCOAs, the UBR5-degron is not accessible, preventing its ubiquitination and degradation. In terms of processing, sumoylation at Lys-277 and Lys-293 negatively regulates its transcriptional activity. Sumoylation at Lys-703 positively regulates its transcriptional activity in the presence of RWDD3. Sumoylation at Lys-277 and Lys-293 is dispensable whereas sumoylation at Lys-703 is critical for the stimulatory effect of RWDD3 on its transcriptional activity. Heat shock increases sumoylation in a RWDD3-dependent manner. In terms of tissue distribution, within the infant and adult hippocampal formation, highest expression observed in the DG granule cell layer with moderate levels in the DG hilus, the CA2-CA4 pyramidal cell layer and the proximal part of the CA1 pyramidal cell layer. Moderate to high expression levels found in the presubiculum and in its' superficial layers. Weak but specific expression detected throughout the entire corticle mantle. In the amygdala, moderate levels were detected in the lateral, central and medial nuclei. Moderate expression levels were present in the PVNh alongside the third ventricle.

It localises to the cytoplasm. The protein localises to the nucleus. Its subcellular location is the mitochondrion. It is found in the cytoskeleton. The protein resides in the spindle. It localises to the microtubule organizing center. The protein localises to the centrosome. Its subcellular location is the chromosome. It is found in the nucleoplasm. Its function is as follows. Receptor for glucocorticoids (GC). Has a dual mode of action: as a transcription factor that binds to glucocorticoid response elements (GRE), both for nuclear and mitochondrial DNA, and as a modulator of other transcription factors. Affects inflammatory responses, cellular proliferation and differentiation in target tissues. Involved in chromatin remodeling. Plays a role in rapid mRNA degradation by binding to the 5' UTR of target mRNAs and interacting with PNRC2 in a ligand-dependent manner which recruits the RNA helicase UPF1 and the mRNA-decapping enzyme DCP1A, leading to RNA decay. Could act as a coactivator for STAT5-dependent transcription upon growth hormone (GH) stimulation and could reveal an essential role of hepatic GR in the control of body growth. Mediates glucocorticoid-induced apoptosis. Promotes accurate chromosome segregation during mitosis. May act as a tumor suppressor. May play a negative role in adipogenesis through the regulation of lipolytic and antilipogenic gene expression. The protein is Glucocorticoid receptor (NR3C1) of Callithrix jacchus (White-tufted-ear marmoset).